We begin with the raw amino-acid sequence, 207 residues long: Large ribosomal subunit protein uL4 (207 aa).

Positions 57-78 (VAGGGKKPWRQKGTGRARHGSI) are disordered. Residues 63-77 (KPWRQKGTGRARHGS) show a composition bias toward basic residues.

This sequence belongs to the universal ribosomal protein uL4 family. As to quaternary structure, part of the 50S ribosomal subunit.

One of the primary rRNA binding proteins, this protein initially binds near the 5'-end of the 23S rRNA. It is important during the early stages of 50S assembly. It makes multiple contacts with different domains of the 23S rRNA in the assembled 50S subunit and ribosome. In terms of biological role, forms part of the polypeptide exit tunnel. In Onion yellows phytoplasma (strain OY-M), this protein is Large ribosomal subunit protein uL4.